Reading from the N-terminus, the 360-residue chain is Phospho-N-acetylmuramoyl-pentapeptide-transferase (360 aa).

10 consecutive transmembrane segments (helical) span residues 25–45, 73–93, 97–117, 134–154, 168–188, 199–219, 236–256, 263–283, 288–308, and 338–358; these read RGIL…PWMI, TMGG…WADL, YVWV…VDDY, YFWQ…TAPT, LAIP…VGSS, GLAI…CYLS, AGEL…FLWF, VFMG…IAVI, VVLF…VIQV, and VIVR…ATLK.

The protein belongs to the glycosyltransferase 4 family. MraY subfamily. Mg(2+) serves as cofactor.

The protein resides in the cell inner membrane. The catalysed reaction is UDP-N-acetyl-alpha-D-muramoyl-L-alanyl-gamma-D-glutamyl-meso-2,6-diaminopimeloyl-D-alanyl-D-alanine + di-trans,octa-cis-undecaprenyl phosphate = di-trans,octa-cis-undecaprenyl diphospho-N-acetyl-alpha-D-muramoyl-L-alanyl-D-glutamyl-meso-2,6-diaminopimeloyl-D-alanyl-D-alanine + UMP. The protein operates within cell wall biogenesis; peptidoglycan biosynthesis. Functionally, catalyzes the initial step of the lipid cycle reactions in the biosynthesis of the cell wall peptidoglycan: transfers peptidoglycan precursor phospho-MurNAc-pentapeptide from UDP-MurNAc-pentapeptide onto the lipid carrier undecaprenyl phosphate, yielding undecaprenyl-pyrophosphoryl-MurNAc-pentapeptide, known as lipid I. The chain is Phospho-N-acetylmuramoyl-pentapeptide-transferase from Pseudomonas entomophila (strain L48).